A 283-amino-acid polypeptide reads, in one-letter code: Thymidylate synthase (283 aa).

Arg22 is a binding site for dUMP. The active-site Nucleophile is Cys160. DUMP-binding positions include 180-183 (RSCD), Asn191, and 221-223 (HIY). Asp183 contributes to the (6R)-5,10-methylene-5,6,7,8-tetrahydrofolate binding site. (6R)-5,10-methylene-5,6,7,8-tetrahydrofolate is bound at residue Ser282.

This sequence belongs to the thymidylate synthase family. Bacterial-type ThyA subfamily. As to quaternary structure, homodimer.

It is found in the cytoplasm. It catalyses the reaction dUMP + (6R)-5,10-methylene-5,6,7,8-tetrahydrofolate = 7,8-dihydrofolate + dTMP. The protein operates within pyrimidine metabolism; dTTP biosynthesis. Its function is as follows. Catalyzes the reductive methylation of 2'-deoxyuridine-5'-monophosphate (dUMP) to 2'-deoxythymidine-5'-monophosphate (dTMP) while utilizing 5,10-methylenetetrahydrofolate (mTHF) as the methyl donor and reductant in the reaction, yielding dihydrofolate (DHF) as a by-product. This enzymatic reaction provides an intracellular de novo source of dTMP, an essential precursor for DNA biosynthesis. This chain is Thymidylate synthase, found in Aliivibrio fischeri (strain ATCC 700601 / ES114) (Vibrio fischeri).